Reading from the N-terminus, the 203-residue chain is SPbeta prophage-derived uncharacterized protein YouA (203 aa).

The segment at 1-23 is disordered; the sequence is MAFLNQDGDKYTSAKDDGTGNPI. The span at 7 to 18 shows a compositional bias: basic and acidic residues; the sequence is DGDKYTSAKDDG.

This is SPbeta prophage-derived uncharacterized protein YouA (youA) from Bacillus subtilis (strain 168).